The primary structure comprises 487 residues: Serine/threonine-protein kinase 4 (487 aa).

Position 1 is an N-acetylmethionine (Met-1). Thr-3 is modified (phosphothreonine). One can recognise a Protein kinase domain in the interval 30-281 (FDVLEKLGEG…ATQLLQHPFV (252 aa)). ATP contacts are provided by residues 36 to 44 (LGEGSYGSV) and Lys-59. The Proton acceptor role is filled by Asp-149. Thr-183 is subject to Phosphothreonine; by autocatalysis. At Ser-265 the chain carries Phosphoserine. The stretch at 290-310 (LRDLINEAMDVKLKRQESQQR) forms a coiled coil. Over residues 303-312 (KRQESQQREV) the composition is skewed to basic and acidic residues. A disordered region spans residues 303 to 332 (KRQESQQREVDQDDEENSEEDEMDSGTMVR). The segment covering 313 to 326 (DQDDEENSEEDEMD) has biased composition (acidic residues). Ser-320 carries the phosphoserine modification. Thr-340 and Thr-367 each carry phosphothreonine. Thr-387 carries the post-translational modification Phosphothreonine; by PKB/AKT1. A phosphoserine mark is found at Ser-410 and Ser-414. Tyr-433 carries the post-translational modification Phosphotyrosine. The 48-residue stretch at 433–480 (YEFLKSWTVEDLQKRLLALDPMMEQEIEEIRQKYQSKRQPILDAIEAK) folds into the SARAH domain.

The protein belongs to the protein kinase superfamily. STE Ser/Thr protein kinase family. STE20 subfamily. In terms of assembly, homodimer; mediated via the coiled-coil region. Interacts with NORE1, which inhibits autoactivation. Interacts with and stabilizes SAV1. Interacts with RASSF1. Interacts with FOXO3. Interacts with RASSF2 (via SARAH domain). Interacts with AR, PKB/AKT1, TNNI3 and SIRT1. Interacts with DLG5 (via PDZ domain 3). Interacts with MARK3 and SCRIB in the presence of DLG5. The cofactor is Mg(2+). Autophosphorylated on serine and threonine residues. Phosphorylation at Thr-387 by PKB/AKT1, leads to inhibition of its: kinase activity, nuclear translocation and autophosphorylation at Thr-183. It also diminishes its cleavage by caspases and its ability to phosphorylate FOXO3. Post-translationally, proteolytically cleaved by caspase-3 during apoptosis at Asp-326 and Asp-349 resulting in a 37 kDa or a 39 kDa subunit respectively. The 39 kDa subunit is further cleaved into the 37 kDa form. Proteolytic cleavage results in kinase activation and nuclear translocation of the truncated form (MST1/N). It is less likely that cleavage at Asp-349 is a prerequisite for activation as this site is not conserved in the murine ortholog.

It is found in the cytoplasm. The protein resides in the nucleus. The catalysed reaction is L-seryl-[protein] + ATP = O-phospho-L-seryl-[protein] + ADP + H(+). It catalyses the reaction L-threonyl-[protein] + ATP = O-phospho-L-threonyl-[protein] + ADP + H(+). With respect to regulation, inhibited by the C-terminal non-catalytic region. Activated by caspase-cleavage. Full activation also requires homodimerization and autophosphorylation of Thr-183. Activated by RASSF1 which acts by preventing its dephosphorylation. Stress-activated, pro-apoptotic kinase which, following caspase-cleavage, enters the nucleus and induces chromatin condensation followed by internucleosomal DNA fragmentation. Key component of the Hippo signaling pathway which plays a pivotal role in organ size control and tumor suppression by restricting proliferation and promoting apoptosis. The core of this pathway is composed of a kinase cascade wherein STK3/MST2 and STK4/MST1, in complex with its regulatory protein SAV1, phosphorylates and activates LATS1/2 in complex with its regulatory protein MOB1, which in turn phosphorylates and inactivates YAP1 oncoprotein and WWTR1/TAZ. Phosphorylation of YAP1 by LATS2 inhibits its translocation into the nucleus to regulate cellular genes important for cell proliferation, cell death, and cell migration. STK3/MST2 and STK4/MST1 are required to repress proliferation of mature hepatocytes, to prevent activation of facultative adult liver stem cells (oval cells), and to inhibit tumor formation. Phosphorylates 'Ser-14' of histone H2B (H2BS14ph) during apoptosis. Phosphorylates FOXO3 upon oxidative stress, which results in its nuclear translocation and cell death initiation. Phosphorylates MOBKL1A, MOBKL1B and RASSF2. Phosphorylates TNNI3 (cardiac Tn-I) and alters its binding affinity to TNNC1 (cardiac Tn-C) and TNNT2 (cardiac Tn-T). Phosphorylates FOXO1 on 'Ser-212' and regulates its activation and stimulates transcription of PMAIP1 in a FOXO1-dependent manner. Phosphorylates SIRT1 and inhibits SIRT1-mediated p53/TP53 deacetylation, thereby promoting p53/TP53 dependent transcription and apoptosis upon DNA damage. Acts as an inhibitor of PKB/AKT1. Phosphorylates AR on 'Ser-650' and suppresses its activity by intersecting with PKB/AKT1 signaling and antagonizing formation of AR-chromatin complexes. This is Serine/threonine-protein kinase 4 (STK4) from Papio anubis (Olive baboon).